The primary structure comprises 201 residues: Prostamide/prostaglandin F synthase (201 aa).

It belongs to the peroxiredoxin-like PRXL2 family. Prostamide/prostaglandin F synthase subfamily.

The protein localises to the cytoplasm. The protein resides in the cytosol. The catalysed reaction is prostaglandin H2 + [thioredoxin]-dithiol = prostaglandin F2alpha + [thioredoxin]-disulfide. It catalyses the reaction prostamide F2alpha + [thioredoxin]-disulfide = prostamide H2 + [thioredoxin]-dithiol. Its function is as follows. Catalyzes the reduction of prostaglandin-ethanolamide H(2) (prostamide H(2)) to prostamide F(2alpha) with NADPH as proton donor. Also able to reduce prostaglandin H(2) to prostaglandin F(2alpha). The sequence is that of Prostamide/prostaglandin F synthase (prxl2b) from Aquarana catesbeiana (American bullfrog).